Reading from the N-terminus, the 650-residue chain is Threonine--tRNA ligase (650 aa).

The 61-residue stretch at 1-61 (MIKITFPDGA…DEDGTLEIVM (61 aa)) folds into the TGS domain. The segment at 242 to 540 (DHRKLGKELD…LIETYKGAFP (299 aa)) is catalytic. Zn(2+) is bound by residues Cys-336, His-387, and His-517.

This sequence belongs to the class-II aminoacyl-tRNA synthetase family. As to quaternary structure, homodimer. Zn(2+) is required as a cofactor.

It localises to the cytoplasm. It carries out the reaction tRNA(Thr) + L-threonine + ATP = L-threonyl-tRNA(Thr) + AMP + diphosphate + H(+). Functionally, catalyzes the attachment of threonine to tRNA(Thr) in a two-step reaction: L-threonine is first activated by ATP to form Thr-AMP and then transferred to the acceptor end of tRNA(Thr). Also edits incorrectly charged L-seryl-tRNA(Thr). In Streptococcus suis (strain 98HAH33), this protein is Threonine--tRNA ligase.